A 397-amino-acid polypeptide reads, in one-letter code: 8-amino-7-oxononanoate synthase (397 aa).

Arg23 contacts substrate. Residue 110–111 (GY) coordinates pyridoxal 5'-phosphate. Residue His135 participates in substrate binding. 3 residues coordinate pyridoxal 5'-phosphate: Ser181, His209, and Thr237. At Lys240 the chain carries N6-(pyridoxal phosphate)lysine. Thr354 is a substrate binding site.

Belongs to the class-II pyridoxal-phosphate-dependent aminotransferase family. BioF subfamily. In terms of assembly, homodimer. Requires pyridoxal 5'-phosphate as cofactor.

The catalysed reaction is 6-carboxyhexanoyl-[ACP] + L-alanine + H(+) = (8S)-8-amino-7-oxononanoate + holo-[ACP] + CO2. Its pathway is cofactor biosynthesis; biotin biosynthesis. Functionally, catalyzes the decarboxylative condensation of pimeloyl-[acyl-carrier protein] and L-alanine to produce 8-amino-7-oxononanoate (AON), [acyl-carrier protein], and carbon dioxide. This Anaeromyxobacter dehalogenans (strain 2CP-C) protein is 8-amino-7-oxononanoate synthase.